A 143-amino-acid chain; its full sequence is Transcriptional regulator MraZ (143 aa).

SpoVT-AbrB domains lie at 5 to 47 (TYTP…PREE) and 76 to 119 (TDEQ…DAQA).

This sequence belongs to the MraZ family. As to quaternary structure, forms oligomers.

It is found in the cytoplasm. The protein resides in the nucleoid. The polypeptide is Transcriptional regulator MraZ (Rhodococcus opacus (strain B4)).